The primary structure comprises 484 residues: Cobyric acid synthase (484 aa).

One can recognise a GATase cobBQ-type domain in the interval 248–435 (VLKVIVPVLP…LHGLFEGSQS (188 aa)). Cys-329 acts as the Nucleophile in catalysis. His-427 is a catalytic residue.

It belongs to the CobB/CobQ family. CobQ subfamily.

It functions in the pathway cofactor biosynthesis; adenosylcobalamin biosynthesis. Functionally, catalyzes amidations at positions B, D, E, and G on adenosylcobyrinic A,C-diamide. NH(2) groups are provided by glutamine, and one molecule of ATP is hydrogenolyzed for each amidation. This Pseudomonas putida (strain GB-1) protein is Cobyric acid synthase.